Here is a 227-residue protein sequence, read N- to C-terminus: Phosphoglycolate phosphatase (227 aa).

Catalysis depends on D11, which acts as the Nucleophile. Mg(2+)-binding residues include D11 and D13. K155 contributes to the substrate binding site. 2 residues coordinate Mg(2+): D178 and D182.

This sequence belongs to the archaeal SPP-like hydrolase family. The cofactor is Mg(2+).

It catalyses the reaction 2-phosphoglycolate + H2O = glycolate + phosphate. In terms of biological role, catalyzes the dephosphorylation of 2-phosphoglycolate. This chain is Phosphoglycolate phosphatase, found in Haloarcula marismortui (strain ATCC 43049 / DSM 3752 / JCM 8966 / VKM B-1809) (Halobacterium marismortui).